We begin with the raw amino-acid sequence, 359 residues long: CMP-N-acetylneuraminate-poly-alpha-2,8-sialyltransferase (359 aa).

Over 1–7 the chain is Cytoplasmic; it reads MRSIRKR. The helical; Signal-anchor for type II membrane protein transmembrane segment at 8 to 20 threads the bilayer; it reads WTICTISLLLIFY. Over 21–359 the chain is Lumenal; sequence KTKEIARTEE…KLTTGKCMKQ (339 aa). N-linked (GlcNAc...) asparagine glycosylation is found at Asn50, Asn74, and Asn119. Disulfide bonds link Cys142–Cys292 and Cys156–Cys356. Asn147 and Asn170 together coordinate CMP-N-acetyl-beta-neuraminate. N-linked (GlcNAc...) asparagine glycans are attached at residues Asn204 and Asn219. CMP-N-acetyl-beta-neuraminate-binding residues include Ser279, Thr280, Gly281, and Trp301. His331 (proton donor/acceptor) is an active-site residue.

It belongs to the glycosyltransferase 29 family. Post-translationally, autopolysialylated.

Its subcellular location is the golgi apparatus membrane. It is found in the secreted. It carries out the reaction [N-acetyl-alpha-D-neuraminosyl-(2-&gt;8)](n) + CMP-N-acetyl-beta-neuraminate = [N-acetyl-alpha-D-neuraminosyl-(2-&gt;8)](n+1) + CMP + H(+). The protein operates within protein modification; protein glycosylation. Catalyzes the transfer of a sialic acid from a CMP-linked sialic acid donor onto a terminal alpha-2,3-, alpha-2,6-, or alpha-2,8-linked sialic acid of an N-linked glycan protein acceptor through alpha-2,8-linkages. Therefore, participates in polysialic acid synthesis on various sialylated N-acetyllactosaminyl oligosaccharides, including NCAM1 N-glycans, FETUB N-glycans and AHSG. It is noteworthy that alpha-2,3-linked sialic acid is apparently a better acceptor than alpha-2,6-linked sialic acid. This is CMP-N-acetylneuraminate-poly-alpha-2,8-sialyltransferase from Cricetulus griseus (Chinese hamster).